A 397-amino-acid chain; its full sequence is Succinyl-diaminopimelate desuccinylase (397 aa).

His-73 is a binding site for Zn(2+). Residue Asp-75 is part of the active site. Asp-106 contributes to the Zn(2+) binding site. Glu-140 acts as the Proton acceptor in catalysis. The Zn(2+) site is built by Glu-141, Glu-169, and His-366.

The protein belongs to the peptidase M20A family. DapE subfamily. As to quaternary structure, homodimer. Requires Zn(2+) as cofactor. It depends on Co(2+) as a cofactor.

The catalysed reaction is N-succinyl-(2S,6S)-2,6-diaminopimelate + H2O = (2S,6S)-2,6-diaminopimelate + succinate. Its pathway is amino-acid biosynthesis; L-lysine biosynthesis via DAP pathway; LL-2,6-diaminopimelate from (S)-tetrahydrodipicolinate (succinylase route): step 3/3. Catalyzes the hydrolysis of N-succinyl-L,L-diaminopimelic acid (SDAP), forming succinate and LL-2,6-diaminopimelate (DAP), an intermediate involved in the bacterial biosynthesis of lysine and meso-diaminopimelic acid, an essential component of bacterial cell walls. The sequence is that of Succinyl-diaminopimelate desuccinylase from Rhizobium etli (strain ATCC 51251 / DSM 11541 / JCM 21823 / NBRC 15573 / CFN 42).